Here is an 810-residue protein sequence, read N- to C-terminus: F-BAR domain only protein 2 (810 aa).

The region spanning 3–250 (MAYFVENFWG…NMANTTVESL (248 aa)) is the F-BAR domain. The tract at residues 3–274 (MAYFVENFWG…PGLIEFEECD (272 aa)) is mediates dimerization and binding to membranes enriched in Pi(4,5)-P2 and induces their tubulation. Residues 87–156 (HLDLVRKLQE…CVEQERLKKE (70 aa)) are a coiled coil. A Glycyl lysine isopeptide (Lys-Gly) (interchain with G-Cter in SUMO2) cross-link involves residue Lys297. Positions 301 to 352 (DAESVECPDADSLNIPDVDEEGYSIKPETNQNDTKENHFYSSSDSDSEDEEP) are disordered. The residue at position 312 (Ser312) is a Phosphoserine. Thr385 carries the phosphothreonine modification. Residues Ser387, Ser394, and Ser403 each carry the phosphoserine modification. Positions 403-537 (SNEELTKSKP…VSRGPSPVSL (135 aa)) are disordered. Residues 433–456 (PSLDSSSSSSLTSSSSARPTTPLS) are compositionally biased toward low complexity. A phosphoserine mark is found at Ser488, Ser493, Ser496, Ser508, Ser510, Ser511, and Ser533. Residues 502-521 (PLARAESSSSISSSASLSAA) are compositionally biased toward low complexity. A mediates interaction with DAB2, EPS15, EPS15R and ITSN1 region spans residues 521 to 810 (ANTPTVGVSR…FATGRYLADC (290 aa)). The 268-residue stretch at 542 to 809 (TLPVAVALTE…RFATGRYLAD (268 aa)) folds into the MHD domain.

This sequence belongs to the FCHO family. As to quaternary structure, homodimer; disulfide-linked. May form homotetramer. Interacts with AP2A1. Interacts with EPS15, EPS15R, ITSN1 and ITSN2; recruit those scaffolding proteins which in turn may interact with the adaptor protein complex AP-2 at the plasma membrane. Interacts with DAB2 (via DPF motifs); mediates LDL receptor/LDLR endocytosis. Ubiquitinated. Mainly undergoes monoubiquitination but also polyubiquitination.

The protein resides in the membrane. It is found in the clathrin-coated pit. Its function is as follows. Functions in an early step of clathrin-mediated endocytosis. Has both a membrane binding/bending activity and the ability to recruit proteins essential to the formation of functional clathrin-coated pits. Has a lipid-binding activity with a preference for membranes enriched in phosphatidylserine and phosphoinositides (Pi(4,5) biphosphate) like the plasma membrane. Its membrane-bending activity might be important for the subsequent action of clathrin and adaptors in the formation of clathrin-coated vesicles. Involved in adaptor protein complex AP-2-dependent endocytosis of the transferrin receptor, it also functions in the AP-2-independent endocytosis of the LDL receptor. The chain is F-BAR domain only protein 2 (FCHO2) from Pongo abelii (Sumatran orangutan).